The chain runs to 352 residues: 7,8-didemethyl-8-hydroxy-5-deazariboflavin synthase (352 aa).

The region spanning isoleucine 35–asparagine 275 is the Radical SAM core domain. Positions 49, 53, and 56 each coordinate [4Fe-4S] cluster.

This sequence belongs to the radical SAM superfamily. CofG family. As to quaternary structure, consists of two subunits, CofG and CofH. Requires [4Fe-4S] cluster as cofactor.

It catalyses the reaction 5-amino-5-(4-hydroxybenzyl)-6-(D-ribitylimino)-5,6-dihydrouracil + S-adenosyl-L-methionine = 7,8-didemethyl-8-hydroxy-5-deazariboflavin + 5'-deoxyadenosine + L-methionine + NH4(+) + H(+). Its pathway is cofactor biosynthesis; coenzyme F0 biosynthesis. In terms of biological role, catalyzes the radical-mediated synthesis of 7,8-didemethyl-8-hydroxy-5-deazariboflavin from 5-amino-5-(4-hydroxybenzyl)-6-(D-ribitylimino)-5,6-dihydrouracil. This chain is 7,8-didemethyl-8-hydroxy-5-deazariboflavin synthase, found in Methanococcus maripaludis (strain C6 / ATCC BAA-1332).